Here is a 344-residue protein sequence, read N- to C-terminus: uncharacterized protein (344 aa).

The interval 190 to 232 (SGKRVRSAKKSGADAARASEGATCDRASSESVSPTARPPAQAS) is disordered.

This is an uncharacterized protein from Treponema pallidum (strain Nichols).